A 238-amino-acid chain; its full sequence is Small ribosomal subunit protein eS4 (238 aa).

An S4 RNA-binding domain is found at 38 to 109; it reads IPLALVIRDV…DERSYYALVP (72 aa).

It belongs to the eukaryotic ribosomal protein eS4 family.

The polypeptide is Small ribosomal subunit protein eS4 (Pyrobaculum neutrophilum (strain DSM 2338 / JCM 9278 / NBRC 100436 / V24Sta) (Thermoproteus neutrophilus)).